A 195-amino-acid chain; its full sequence is Dual-action ribosomal maturation protein DarP (195 aa).

The protein belongs to the DarP family.

Its subcellular location is the cytoplasm. Functionally, member of a network of 50S ribosomal subunit biogenesis factors which assembles along the 30S-50S interface, preventing incorrect 23S rRNA structures from forming. Promotes peptidyl transferase center (PTC) maturation. The polypeptide is Dual-action ribosomal maturation protein DarP (Stenotrophomonas maltophilia (strain K279a)).